The primary structure comprises 253 residues: Triosephosphate isomerase (253 aa).

Residue 8 to 10 coordinates substrate; it reads NWK. The active-site Electrophile is the His93. The Proton acceptor role is filled by Glu165. Residues Gly171, Ser210, and 231–232 contribute to the substrate site; that span reads GG.

Belongs to the triosephosphate isomerase family. Homodimer.

It is found in the cytoplasm. It catalyses the reaction D-glyceraldehyde 3-phosphate = dihydroxyacetone phosphate. Its pathway is carbohydrate biosynthesis; gluconeogenesis. It participates in carbohydrate degradation; glycolysis; D-glyceraldehyde 3-phosphate from glycerone phosphate: step 1/1. Involved in the gluconeogenesis. Catalyzes stereospecifically the conversion of dihydroxyacetone phosphate (DHAP) to D-glyceraldehyde-3-phosphate (G3P). The polypeptide is Triosephosphate isomerase (Francisella tularensis subsp. novicida (strain U112)).